Reading from the N-terminus, the 231-residue chain is 5'-methylthioadenosine/S-adenosylhomocysteine nucleosidase (231 aa).

Catalysis depends on Glu12, which acts as the Proton acceptor. Substrate contacts are provided by residues Gly78, Met153, and 174–175 (ME). The active-site Proton donor is Asp198.

This sequence belongs to the PNP/UDP phosphorylase family. MtnN subfamily.

It carries out the reaction S-adenosyl-L-homocysteine + H2O = S-(5-deoxy-D-ribos-5-yl)-L-homocysteine + adenine. The catalysed reaction is S-methyl-5'-thioadenosine + H2O = 5-(methylsulfanyl)-D-ribose + adenine. It catalyses the reaction 5'-deoxyadenosine + H2O = 5-deoxy-D-ribose + adenine. The protein operates within amino-acid biosynthesis; L-methionine biosynthesis via salvage pathway; S-methyl-5-thio-alpha-D-ribose 1-phosphate from S-methyl-5'-thioadenosine (hydrolase route): step 1/2. Its function is as follows. Catalyzes the irreversible cleavage of the glycosidic bond in both 5'-methylthioadenosine (MTA) and S-adenosylhomocysteine (SAH/AdoHcy) to adenine and the corresponding thioribose, 5'-methylthioribose and S-ribosylhomocysteine, respectively. Also cleaves 5'-deoxyadenosine, a toxic by-product of radical S-adenosylmethionine (SAM) enzymes, into 5-deoxyribose and adenine. The sequence is that of 5'-methylthioadenosine/S-adenosylhomocysteine nucleosidase from Bacillus licheniformis (strain ATCC 14580 / DSM 13 / JCM 2505 / CCUG 7422 / NBRC 12200 / NCIMB 9375 / NCTC 10341 / NRRL NRS-1264 / Gibson 46).